The chain runs to 157 residues: Homeobox protein DBX2 (157 aa).

Positions 9-68 form a DNA-binding region, homeobox; the sequence is GILRRAVFSEDQRKALEKMFQKQKYISKTDRKKLAINLGLKESQVKIWFQNRRMKWRNSK. The interval 105–157 is disordered; the sequence is SQEQTSPRWKEKSPGNSERLTSTQPPPRANSSQSPLYLYPDHDTANKAVTSSD. The segment covering 118 to 139 has biased composition (polar residues); the sequence is PGNSERLTSTQPPPRANSSQSP.

It belongs to the H2.0 homeobox family. Localized to the central nervous system during embryogenesis. It is found restricted to the rostro-caudal and dorso-ventral regions of the hindbrain. In the ventricular zone of the spinal cord, it localizes to the dorsal part of the basal plate. In the adult, it is detected in ovary.

The protein resides in the nucleus. Its function is as follows. Appears to perform a very early function in establishing the identity of a subset of cells that originate in the region of the ventricular zone in the developing spinal cord and in the hindbrain. This is Homeobox protein DBX2 (DBX2) from Gallus gallus (Chicken).